A 240-amino-acid polypeptide reads, in one-letter code: Glycerol uptake facilitator protein 3 (240 aa).

Transmembrane regions (helical) follow at residues 11–31 (LGEF…VAGV) and 41–61 (AGWV…VYAS). The NPA 1 motif lies at 70 to 72 (NPA). 3 helical membrane-spanning segments follow: residues 88 to 108 (VIPY…VVWL), 137 to 157 (FWNF…LLAF), and 162 to 182 (FTAG…GLSL). Residues 191–193 (NPA) carry the NPA 2 motif. The helical transmembrane segment at 219-239 (WVPIAGPLVGGALGALLFNVL) threads the bilayer.

Belongs to the MIP/aquaporin (TC 1.A.8) family.

The protein resides in the cell membrane. Transporter that facilitates the transmembrane diffusion of water, dihydroxyacetone, glycerol and H(2)O(2). Is not permeable to urea and D/L-lactic acid. This Lactiplantibacillus plantarum (strain ATCC BAA-793 / NCIMB 8826 / WCFS1) (Lactobacillus plantarum) protein is Glycerol uptake facilitator protein 3.